A 330-amino-acid polypeptide reads, in one-letter code: MHPKVDALLSRFPRITLIPWETPIQYLPRISRELGVDVYVKRDDLTGLGIGGNKIRKLEFLLGDALSRGCDTVITIGAVHSNHAFVTALAAKKLGLGAVLILRGEEVLKGNYLLDKLMGIETRIYEADNSWELMKVAEEVAEELKGEGKKPYIIPPGGASPVGTLGYIRGVGELYTQVKKLGLRIDTVVDAVGSGGTYAGLLLGSAIVNAEWSVVGIDVSSATEKAKERVKNLVEKTKELLGINVKVQEPRIYDYGFGAYGKIVKEVAKLIKSVGTMEGLLLDPVYTGKAFYGLMDLAKKGDLGESVLFIHTGGLPGIFHYGEEMLELLV.

An N6-(pyridoxal phosphate)lysine modification is found at lysine 54.

Belongs to the ACC deaminase/D-cysteine desulfhydrase family. Pyridoxal 5'-phosphate serves as cofactor.

The catalysed reaction is 1-aminocyclopropane-1-carboxylate + H2O = 2-oxobutanoate + NH4(+). This chain is Putative 1-aminocyclopropane-1-carboxylate deaminase, found in Pyrococcus abyssi (strain GE5 / Orsay).